The sequence spans 74 residues: Mitotic-spindle organizing protein 1 (74 aa).

Belongs to the MOZART1 family. In terms of assembly, part of the gamma-tubulin complex.

It localises to the cytoplasm. Its subcellular location is the cytoskeleton. It is found in the microtubule organizing center. The protein resides in the spindle pole body. In terms of biological role, required for gamma-tubulin complex recruitment to the microtubule organizing center (MTOC). The chain is Mitotic-spindle organizing protein 1 from Emericella nidulans (strain FGSC A4 / ATCC 38163 / CBS 112.46 / NRRL 194 / M139) (Aspergillus nidulans).